The primary structure comprises 371 residues: Chaperone protein DnaJ (371 aa).

The region spanning 5-69 (DYYEVLGLSK…QKRAQYDQFG (65 aa)) is the J domain. A CR-type zinc finger spans residues 133–215 (GKELNVEIPV…CHGSGKVRKR (83 aa)). Zn(2+)-binding residues include Cys146, Cys149, Cys163, Cys166, Cys189, Cys192, Cys203, and Cys206. CXXCXGXG motif repeat units follow at residues 146-153 (CDTCKGSG), 163-170 (CKHCSGSG), 189-196 (CSHCSGTG), and 203-210 (CTTCHGSG).

Belongs to the DnaJ family. As to quaternary structure, homodimer. Zn(2+) is required as a cofactor.

The protein localises to the cytoplasm. Participates actively in the response to hyperosmotic and heat shock by preventing the aggregation of stress-denatured proteins and by disaggregating proteins, also in an autonomous, DnaK-independent fashion. Unfolded proteins bind initially to DnaJ; upon interaction with the DnaJ-bound protein, DnaK hydrolyzes its bound ATP, resulting in the formation of a stable complex. GrpE releases ADP from DnaK; ATP binding to DnaK triggers the release of the substrate protein, thus completing the reaction cycle. Several rounds of ATP-dependent interactions between DnaJ, DnaK and GrpE are required for fully efficient folding. Also involved, together with DnaK and GrpE, in the DNA replication of plasmids through activation of initiation proteins. The protein is Chaperone protein DnaJ of Bacillus cereus (strain 03BB102).